Consider the following 150-residue polypeptide: Large ribosomal subunit protein uL13 (150 aa).

The disordered stretch occupies residues Lys127 to Lys150. Residues Gln136–Lys150 are compositionally biased toward polar residues.

Belongs to the universal ribosomal protein uL13 family. As to quaternary structure, part of the 50S ribosomal subunit.

Functionally, this protein is one of the early assembly proteins of the 50S ribosomal subunit, although it is not seen to bind rRNA by itself. It is important during the early stages of 50S assembly. This Synechococcus sp. (strain CC9902) protein is Large ribosomal subunit protein uL13.